We begin with the raw amino-acid sequence, 852 residues long: Ral guanine nucleotide dissociation stimulator (852 aa).

Residues 57–194 (KVRTVKAGTL…RAHLLLAQLE (138 aa)) enclose the N-terminal Ras-GEF domain. The Ras-GEF domain occupies 324 to 586 (PPDLVAEQFT…YTLSCELEPP (263 aa)). Disordered regions lie at residues 606–627 (WSDR…SKSC) and 665–711 (VPES…STTR). Low complexity-rich tracts occupy residues 613-624 (STELSTSSSAHS) and 683-710 (SSPE…VSTT). Residues 736–823 (DCCIIRVSLD…YDFILKKRTF (88 aa)) form the Ras-associating domain. Tyrosine 752 carries the post-translational modification Phosphotyrosine.

As to quaternary structure, interacts with RIT1 and RIT2. Interacts with OOG1. Interacts with TRAF3. Interacts with HRAS. In terms of processing, phosphorylation of Tyr-752 by MET blocks HRAS binding.

It is found in the cytoplasm. Its subcellular location is the nucleus. In terms of biological role, functions as a guanine nucleotide exchange factor (GEF) activating either RalA or RalB GTPases and plays an important role in intracellular transport. Interacts and acts as an effector molecule for R-Ras, H-Ras, K-Ras, and Rap. During bacterial clearance, recognizes 'Lys-33'-linked polyubiquitinated TRAF3 and subsequently mediates assembly of the exocyst complex. The polypeptide is Ral guanine nucleotide dissociation stimulator (Ralgds) (Mus musculus (Mouse)).